We begin with the raw amino-acid sequence, 220 residues long: Large ribosomal subunit protein bL21c (220 aa).

The protein belongs to the bacterial ribosomal protein bL21 family. As to quaternary structure, part of the 50S ribosomal subunit.

It is found in the plastid. It localises to the chloroplast. In terms of biological role, this protein binds to 23S ribosomal RNA in the presence of protein L20. The sequence is that of Large ribosomal subunit protein bL21c (RPL21) from Arabidopsis thaliana (Mouse-ear cress).